We begin with the raw amino-acid sequence, 397 residues long: MLNSLDLEGRPQDTRVVVAMSGGVDSSATAALLKAQGYDVVGITLQLYDHGEAIHRKGACCAGQDIHDARAVAERIGIPHYVLDYESRFRESVIDSFADSYASGETPVPCIECNRSVKFRDLLATARELGASALATGHYVSSRRLDDGSRALVCAADRDRDQSYFLFATTREQLQFLRFPLGDMTKPQTRELARQFGLSVADKHDSQDICFVPTGRYTDVVERLKPNAMEPGDIVDVDGRVLGQHPGIVHFTVGQRRGLGIASRSPLYVLRLDAAQRQVVVGPREALLMDRIVLRDINWIGDGSLDDVIGDGLELFVRVRSTRAPQPAWLRAANGGYEVELVVGEEGVSPGQACVFYDAAEGQARVLGGGFIKSAAPRRFEGGREQIEAPALAAARG.

ATP contacts are provided by residues 19–26 and L45; that span reads AMSGGVDS. C113 acts as the Nucleophile in catalysis. A disulfide bond links C113 and C210. Residue G137 coordinates ATP. Residues 160-162 are interaction with tRNA; sequence RDQ. The active-site Cysteine persulfide intermediate is the C210.

This sequence belongs to the MnmA/TRMU family.

The protein resides in the cytoplasm. The catalysed reaction is S-sulfanyl-L-cysteinyl-[protein] + uridine(34) in tRNA + AH2 + ATP = 2-thiouridine(34) in tRNA + L-cysteinyl-[protein] + A + AMP + diphosphate + H(+). Functionally, catalyzes the 2-thiolation of uridine at the wobble position (U34) of tRNA, leading to the formation of s(2)U34. The polypeptide is tRNA-specific 2-thiouridylase MnmA (Rhodopseudomonas palustris (strain ATCC BAA-98 / CGA009)).